Reading from the N-terminus, the 527-residue chain is Glutamate--cysteine ligase (527 aa).

It belongs to the glutamate--cysteine ligase type 1 family. Type 1 subfamily.

It catalyses the reaction L-cysteine + L-glutamate + ATP = gamma-L-glutamyl-L-cysteine + ADP + phosphate + H(+). It functions in the pathway sulfur metabolism; glutathione biosynthesis; glutathione from L-cysteine and L-glutamate: step 1/2. This chain is Glutamate--cysteine ligase, found in Pseudomonas paraeruginosa (strain DSM 24068 / PA7) (Pseudomonas aeruginosa (strain PA7)).